A 110-amino-acid polypeptide reads, in one-letter code: U1-lycotoxin-Ls1jj (110 aa).

Residues 1–20 form the signal peptide; sequence MKFVLLFGVLLVTLFSYSSA. The propeptide occupies 21-44; sequence EMLDDFDQADEDELLSLIEKEEAR. 4 disulfides stabilise this stretch: Cys47/Cys62, Cys54/Cys71, Cys61/Cys89, and Cys73/Cys87.

The protein belongs to the neurotoxin 19 (CSTX) family. 03 subfamily. In terms of tissue distribution, expressed by the venom gland.

The protein resides in the secreted. In Lycosa singoriensis (Wolf spider), this protein is U1-lycotoxin-Ls1jj.